Consider the following 312-residue polypeptide: Zinc transporter ZitB (312 aa).

Helical transmembrane passes span 21-41 (LLFA…GGIL), 48-68 (LADA…LLVV), 90-110 (AAFV…WEAI), 123-143 (LMMV…WILH), and 164-184 (LLGS…GWTP).

The protein belongs to the cation diffusion facilitator (CDF) transporter (TC 2.A.4) family. SLC30A subfamily.

It is found in the cell inner membrane. Its function is as follows. Involved in zinc efflux across the cytoplasmic membrane, thus reducing zinc accumulation in the cytoplasm and rendering bacteria more resistant to zinc. It may contribute to zinc homeostasis at low concentrations of zinc. This chain is Zinc transporter ZitB, found in Salmonella typhi.